The following is a 184-amino-acid chain: Mediator of RNA polymerase II transcription subunit 30 (184 aa).

Positions 136–179 form a coiled coil; the sequence is SQLRFASEEKREILEVNKKLKQKNQQLKQIMDQLRNLIWDINSM.

The protein belongs to the Mediator complex subunit 30 family. Component of the Mediator complex.

The protein localises to the nucleus. In terms of biological role, component of the Mediator complex, a coactivator involved in the regulated transcription of nearly all RNA polymerase II-dependent genes. Mediator functions as a bridge to convey information from gene-specific regulatory proteins to the basal RNA polymerase II transcription machinery. Mediator is recruited to promoters by direct interactions with regulatory proteins and serves as a scaffold for the assembly of a functional preinitiation complex with RNA polymerase II and the general transcription factors. This chain is Mediator of RNA polymerase II transcription subunit 30 (med30), found in Xenopus laevis (African clawed frog).